The sequence spans 529 residues: Ectonucleoside triphosphate diphosphohydrolase 3 (529 aa).

Residues 1-22 lie on the Cytoplasmic side of the membrane; the sequence is MFTVMTRQPCEQAGFRALSRTP. The chain crosses the membrane as a helical span at residues 23-43; it reads AIVTLVVLLVSIVVLVTLTLI. The Extracellular portion of the chain corresponds to 44–485; that stretch reads QIRHPQVLPP…PLIHLPIQPP (442 aa). A glycan (N-linked (GlcNAc...) asparagine) is linked at Asn-81. A disulfide bridge links Cys-92 with Cys-116. A glycan (N-linked (GlcNAc...) asparagine) is linked at Asn-149. Catalysis depends on Glu-182, which acts as the Proton acceptor. 222–226 lines the ATP pocket; the sequence is GASTQ. Residues Asn-238, Asn-284, and Asn-318 are each glycosylated (N-linked (GlcNAc...) asparagine). Disulfide bonds link Cys-261–Cys-308, Cys-289–Cys-334, and Cys-347–Cys-353. Residues Asn-381 and Asn-392 are each glycosylated (N-linked (GlcNAc...) asparagine). A disulfide bridge connects residues Cys-399 and Cys-422. Asn-454 is a glycosylation site (N-linked (GlcNAc...) asparagine). The helical transmembrane segment at 486-506 threads the bilayer; sequence VFMGVLAFFTAIALLCLAFLL. Topologically, residues 507–529 are cytoplasmic; the sequence is YLCSSFRTKERSENAFDQAVDSD.

It belongs to the GDA1/CD39 NTPase family. Ca(2+) is required as a cofactor. It depends on Mg(2+) as a cofactor.

It localises to the cell membrane. It catalyses the reaction a ribonucleoside 5'-triphosphate + 2 H2O = a ribonucleoside 5'-phosphate + 2 phosphate + 2 H(+). Catalyzes the hydrolysis of nucleoside triphosphates and diphosphates. Has a threefold preference for the hydrolysis of ATP and UTP over ADP and UDP. This is Ectonucleoside triphosphate diphosphohydrolase 3 from Mus musculus (Mouse).